The following is a 110-amino-acid chain: UPF0060 membrane protein PFL_4337 (110 aa).

The next 4 helical transmembrane spans lie at 5–25, 31–51, 59–79, and 84–104; these read LWFF…WMWL, ALWV…LTKV, AYAA…AVVE, and LGSD…ILFG.

It belongs to the UPF0060 family.

It localises to the cell inner membrane. The protein is UPF0060 membrane protein PFL_4337 of Pseudomonas fluorescens (strain ATCC BAA-477 / NRRL B-23932 / Pf-5).